A 191-amino-acid polypeptide reads, in one-letter code: Probable nicotinate-nucleotide adenylyltransferase (191 aa).

It belongs to the NadD family.

The enzyme catalyses nicotinate beta-D-ribonucleotide + ATP + H(+) = deamido-NAD(+) + diphosphate. Its pathway is cofactor biosynthesis; NAD(+) biosynthesis; deamido-NAD(+) from nicotinate D-ribonucleotide: step 1/1. Its function is as follows. Catalyzes the reversible adenylation of nicotinate mononucleotide (NaMN) to nicotinic acid adenine dinucleotide (NaAD). This is Probable nicotinate-nucleotide adenylyltransferase from Staphylococcus epidermidis (strain ATCC 12228 / FDA PCI 1200).